The chain runs to 385 residues: Lipid-A-disaccharide synthase (385 aa).

The protein belongs to the LpxB family.

It carries out the reaction a lipid X + a UDP-2-N,3-O-bis[(3R)-3-hydroxyacyl]-alpha-D-glucosamine = a lipid A disaccharide + UDP + H(+). It participates in bacterial outer membrane biogenesis; LPS lipid A biosynthesis. Condensation of UDP-2,3-diacylglucosamine and 2,3-diacylglucosamine-1-phosphate to form lipid A disaccharide, a precursor of lipid A, a phosphorylated glycolipid that anchors the lipopolysaccharide to the outer membrane of the cell. The polypeptide is Lipid-A-disaccharide synthase (Pseudoalteromonas translucida (strain TAC 125)).